A 563-amino-acid polypeptide reads, in one-letter code: Dihydroxy-acid dehydratase (563 aa).

Cys51 contacts [2Fe-2S] cluster. Asp83 serves as a coordination point for Mg(2+). Cys124 contacts [2Fe-2S] cluster. 2 residues coordinate Mg(2+): Asp125 and Lys126. The residue at position 126 (Lys126) is an N6-carboxylysine. Cys196 is a [2Fe-2S] cluster binding site. Residue Glu448 participates in Mg(2+) binding. Ser474 (proton acceptor) is an active-site residue.

It belongs to the IlvD/Edd family. As to quaternary structure, homodimer. Requires [2Fe-2S] cluster as cofactor. The cofactor is Mg(2+).

The catalysed reaction is (2R)-2,3-dihydroxy-3-methylbutanoate = 3-methyl-2-oxobutanoate + H2O. It carries out the reaction (2R,3R)-2,3-dihydroxy-3-methylpentanoate = (S)-3-methyl-2-oxopentanoate + H2O. Its pathway is amino-acid biosynthesis; L-isoleucine biosynthesis; L-isoleucine from 2-oxobutanoate: step 3/4. It participates in amino-acid biosynthesis; L-valine biosynthesis; L-valine from pyruvate: step 3/4. Functions in the biosynthesis of branched-chain amino acids. Catalyzes the dehydration of (2R,3R)-2,3-dihydroxy-3-methylpentanoate (2,3-dihydroxy-3-methylvalerate) into 2-oxo-3-methylpentanoate (2-oxo-3-methylvalerate) and of (2R)-2,3-dihydroxy-3-methylbutanoate (2,3-dihydroxyisovalerate) into 2-oxo-3-methylbutanoate (2-oxoisovalerate), the penultimate precursor to L-isoleucine and L-valine, respectively. The sequence is that of Dihydroxy-acid dehydratase from Polynucleobacter necessarius subsp. necessarius (strain STIR1).